The sequence spans 318 residues: Methionyl-tRNA formyltransferase (318 aa).

112 to 115 (SLLP) serves as a coordination point for (6S)-5,6,7,8-tetrahydrofolate.

The protein belongs to the Fmt family.

The enzyme catalyses L-methionyl-tRNA(fMet) + (6R)-10-formyltetrahydrofolate = N-formyl-L-methionyl-tRNA(fMet) + (6S)-5,6,7,8-tetrahydrofolate + H(+). In terms of biological role, attaches a formyl group to the free amino group of methionyl-tRNA(fMet). The formyl group appears to play a dual role in the initiator identity of N-formylmethionyl-tRNA by promoting its recognition by IF2 and preventing the misappropriation of this tRNA by the elongation apparatus. The protein is Methionyl-tRNA formyltransferase of Mycobacterium leprae (strain Br4923).